Reading from the N-terminus, the 941-residue chain is Replicative DNA helicase DnaB (941 aa).

The segment at methionine 1 to leucine 25 is disordered. The SF4 helicase; first part domain maps to arginine 214 to glycine 484. An ATP-binding site is contributed by alanine 245–threonine 252. The 150-residue stretch at leucine 534–isoleucine 683 folds into the DOD-type homing endonuclease domain. The region spanning aspartate 646–glutamine 915 is the SF4 helicase; second part domain. Residues tyrosine 914–phenylalanine 941 are disordered.

This sequence belongs to the helicase family. DnaB subfamily. In terms of assembly, homohexamer. In terms of processing, upon expression in E.coli this protein undergoes self splicing that involves a post-translational excision of the intervening region (intein) followed by peptide ligation.

It carries out the reaction Couples ATP hydrolysis with the unwinding of duplex DNA at the replication fork by translocating in the 5'-3' direction. This creates two antiparallel DNA single strands (ssDNA). The leading ssDNA polymer is the template for DNA polymerase III holoenzyme which synthesizes a continuous strand.. It catalyses the reaction ATP + H2O = ADP + phosphate + H(+). Its function is as follows. The main replicative DNA helicase, it participates in initiation and elongation during chromosome replication. Travels ahead of the DNA replisome, separating dsDNA into templates for DNA synthesis. A processive ATP-dependent 5'-3' DNA helicase it has DNA-dependent ATPase activity. In terms of biological role, the intein is an endonuclease. This chain is Replicative DNA helicase DnaB, found in Rhodothermus marinus (Rhodothermus obamensis).